A 255-amino-acid chain; its full sequence is Kallikrein-4 (255 aa).

The first 25 residues, 1–25 (MMVTARTPWGWFLGCLILEVTGASA), serve as a signal peptide directing secretion. The propeptide occupies 26–31 (SSVSSR). A Peptidase S1 domain is found at 32 to 253 (IIQGQDCSPH…FTNWIQTIIQ (222 aa)). His-41 contributes to the Zn(2+) binding site. The cysteines at positions 57 and 73 are disulfide-linked. The active-site Charge relay system is the His-72. Glu-92 is a binding site for Zn(2+). Catalysis depends on Asp-117, which acts as the Charge relay system. Residues Asn-124 and Asn-170 are each glycosylated (N-linked (GlcNAc...) asparagine). 3 disulfide bridges follow: Cys-149–Cys-214, Cys-179–Cys-193, and Cys-204–Cys-229. The Charge relay system role is filled by Ser-208.

This sequence belongs to the peptidase S1 family. Kallikrein subfamily. Post-translationally, N-glycosylated. The N-glycan structures are of complex diantennary or triantennary type, which may be further modified with up to 2 sialic acid residues.

The protein localises to the secreted. Has a major role in enamel formation. Required during the maturation stage of tooth development for clearance of enamel proteins and normal structural patterning of the crystalline matrix. The polypeptide is Kallikrein-4 (Mus musculus (Mouse)).